A 347-amino-acid polypeptide reads, in one-letter code: GMP reductase (347 aa).

108 to 131 (DDFTKTRQILAMSSALRFICVDVA) is an NADP(+) binding site. K(+) is bound by residues Gly-181 and Gly-183. Cys-186 functions as the Thioimidate intermediate in the catalytic mechanism. 216–239 (IVGDGGCTCPGDVAKAFGGGADFV) is an NADP(+) binding site.

The protein belongs to the IMPDH/GMPR family. GuaC type 1 subfamily. As to quaternary structure, homotetramer.

It carries out the reaction IMP + NH4(+) + NADP(+) = GMP + NADPH + 2 H(+). Catalyzes the irreversible NADPH-dependent deamination of GMP to IMP. It functions in the conversion of nucleobase, nucleoside and nucleotide derivatives of G to A nucleotides, and in maintaining the intracellular balance of A and G nucleotides. In Aeromonas hydrophila subsp. hydrophila (strain ATCC 7966 / DSM 30187 / BCRC 13018 / CCUG 14551 / JCM 1027 / KCTC 2358 / NCIMB 9240 / NCTC 8049), this protein is GMP reductase.